A 1241-amino-acid chain; its full sequence is Sterol 3-beta-glucosyltransferase (1241 aa).

Residues 1–11 (MSGIESTEEPC) show a composition bias toward acidic residues. Disordered regions lie at residues 1-97 (MSGI…KPSI) and 124-189 (DQQV…TLRK). Residues 25–34 (PEERQTRKDS) show a composition bias toward basic and acidic residues. Residues 136-155 (ESEDQQADESSDEQEDDDQD) are compositionally biased toward acidic residues. In terms of domain architecture, GRAM 1 spans 220-267 (NKLKRTFDISDTDVFISDYPCWLMGDVLLQGHLYITKHHILFFAFLPK). Positions 271–373 (SISKSGALTT…WVSSLKKHIF (103 aa)) constitute a PH domain. Positions 499–556 (DDFSQEQESAESSKPVSDDEIVSADDNQELEEKQPQDNLANAEKENHDKVSRANSRRT) are disordered. Residues 516-527 (DDEIVSADDNQE) are compositionally biased toward acidic residues. Positions 540–549 (AEKENHDKVS) are enriched in basic and acidic residues. The GRAM 2 domain maps to 609 to 675 (ERFRKHFSLT…SDIENVNKEK (67 aa)). Positions 720–741 (KGSTDSSPPNASEGSSDESCNL) are disordered. The segment covering 723–741 (TDSSPPNASEGSSDESCNL) has biased composition (polar residues). The UDP-alpha-D-glucose site is built by S797, R798, D800, N1071, V1098, H1100, H1113, S1116, G1117, T1118, D1137, and Q1138.

This sequence belongs to the glycosyltransferase 28 family.

The protein resides in the cytoplasm. It is found in the preautophagosomal structure membrane. The catalysed reaction is a sterol + UDP-alpha-D-glucose = a sterol 3-beta-D-glucoside + UDP + H(+). The enzyme catalyses ergosterol + UDP-alpha-D-glucose = ergosteryl 3-beta-D-glucoside + UDP + H(+). Functionally, sterol glycosyltransferase responsible for the glycosylation of ergosterol to form ergosterol-glucoside. Mediates autophagic degradation of peroxisomes (pexophagy). The sequence is that of Sterol 3-beta-glucosyltransferase from Pichia angusta (Yeast).